We begin with the raw amino-acid sequence, 311 residues long: Cytochrome f (311 aa).

Positions 1-27 (MRRHLSLLIGSLVLGLSLLIAPAASWA) are cleaved as a signal peptide. Residues Tyr28, Cys48, Cys51, and His52 each contribute to the heme site. The helical transmembrane segment at 277–297 (IYGLLAFFAAVALAQIMLVLK) threads the bilayer.

This sequence belongs to the cytochrome f family. As to quaternary structure, the 4 large subunits of the cytochrome b6-f complex are cytochrome b6, subunit IV (17 kDa polypeptide, PetD), cytochrome f and the Rieske protein, while the 4 small subunits are PetG, PetL, PetM and PetN. The complex functions as a dimer. Heme is required as a cofactor.

The protein resides in the cellular thylakoid membrane. Component of the cytochrome b6-f complex, which mediates electron transfer between photosystem II (PSII) and photosystem I (PSI), cyclic electron flow around PSI, and state transitions. This is Cytochrome f from Parasynechococcus marenigrum (strain WH8102).